The primary structure comprises 135 residues: Large ribosomal subunit protein eL32 (135 aa).

Lysine 9 is covalently cross-linked (Glycyl lysine isopeptide (Lys-Gly) (interchain with G-Cter in SUMO2)). Position 50 is an N6-succinyllysine (lysine 50). Serine 62 carries the phosphoserine modification.

Belongs to the eukaryotic ribosomal protein eL32 family. Component of the large ribosomal subunit.

It localises to the cytoplasm. Component of the large ribosomal subunit. The ribosome is a large ribonucleoprotein complex responsible for the synthesis of proteins in the cell. This is Large ribosomal subunit protein eL32 (RPL32) from Macaca fascicularis (Crab-eating macaque).